The following is a 220-amino-acid chain: Large ribosomal subunit protein uL16 (220 aa).

Belongs to the universal ribosomal protein uL16 family. As to quaternary structure, component of the small ribosomal subunit. Mature ribosomes consist of a small (40S) and a large (60S) subunit. The 40S subunit contains about 33 different proteins and 1 molecule of RNA (18S). The 60S subunit contains about 49 different proteins and 3 molecules of RNA (25S, 5.8S and 5S).

The chain is Large ribosomal subunit protein uL16 (RPL10) from Euphorbia esula (Leafy spurge).